The following is a 390-amino-acid chain: Methylthioribose-1-phosphate isomerase (390 aa).

D263 functions as the Proton donor in the catalytic mechanism.

Belongs to the eIF-2B alpha/beta/delta subunits family. MtnA subfamily.

The protein localises to the cytoplasm. The protein resides in the nucleus. It carries out the reaction 5-(methylsulfanyl)-alpha-D-ribose 1-phosphate = 5-(methylsulfanyl)-D-ribulose 1-phosphate. The protein operates within amino-acid biosynthesis; L-methionine biosynthesis via salvage pathway; L-methionine from S-methyl-5-thio-alpha-D-ribose 1-phosphate: step 1/6. Catalyzes the interconversion of methylthioribose-1-phosphate (MTR-1-P) into methylthioribulose-1-phosphate (MTRu-1-P). The sequence is that of Methylthioribose-1-phosphate isomerase from Meyerozyma guilliermondii (strain ATCC 6260 / CBS 566 / DSM 6381 / JCM 1539 / NBRC 10279 / NRRL Y-324) (Yeast).